We begin with the raw amino-acid sequence, 243 residues long: DNA repair protein RecO (243 aa).

It belongs to the RecO family.

Its function is as follows. Involved in DNA repair and RecF pathway recombination. This chain is DNA repair protein RecO, found in Azoarcus sp. (strain BH72).